A 75-amino-acid polypeptide reads, in one-letter code: Small ribosomal subunit protein bS18 (75 aa).

The protein belongs to the bacterial ribosomal protein bS18 family. In terms of assembly, part of the 30S ribosomal subunit. Forms a tight heterodimer with protein bS6.

Its function is as follows. Binds as a heterodimer with protein bS6 to the central domain of the 16S rRNA, where it helps stabilize the platform of the 30S subunit. The protein is Small ribosomal subunit protein bS18 (rbsR) of Rhodobacter capsulatus (strain ATCC BAA-309 / NBRC 16581 / SB1003).